The chain runs to 214 residues: 3-demethoxyubiquinol 3-hydroxylase (214 aa).

Fe cation-binding residues include Glu-63, Glu-93, His-96, Glu-145, Glu-177, and His-180.

It belongs to the COQ7 family. Fe cation serves as cofactor.

The protein localises to the cell membrane. The enzyme catalyses a 5-methoxy-2-methyl-3-(all-trans-polyprenyl)benzene-1,4-diol + AH2 + O2 = a 3-demethylubiquinol + A + H2O. The protein operates within cofactor biosynthesis; ubiquinone biosynthesis. Its function is as follows. Catalyzes the hydroxylation of 2-nonaprenyl-3-methyl-6-methoxy-1,4-benzoquinol during ubiquinone biosynthesis. This chain is 3-demethoxyubiquinol 3-hydroxylase, found in Psychrobacter arcticus (strain DSM 17307 / VKM B-2377 / 273-4).